We begin with the raw amino-acid sequence, 708 residues long: Soluble guanylate cyclase gcy-37 (708 aa).

Histidine 105 is a heme binding site. Residues 368–409 (LNQSRICQMELNKKLEETMKKMKKMTEELEVKKSQTDRLLFE) adopt a coiled-coil conformation. The region spanning 434–562 (SVIFTDIPDF…NTVNVTKSIC (129 aa)) is the Guanylate cyclase domain. Residues aspartate 439 and aspartate 483 each contribute to the Mg(2+) site.

The protein belongs to the adenylyl cyclase class-4/guanylyl cyclase family. In terms of assembly, heterodimer; with other soluble guanylate cyclases. Requires heme as cofactor. In terms of tissue distribution, expressed in a small number of neurons, corresponding to URX, AQR and PQR neurons.

It localises to the cytoplasm. It catalyses the reaction GTP = 3',5'-cyclic GMP + diphosphate. With respect to regulation, may be regulated by molecular oxygen. Probably not activated by nitric oxide (NO). In terms of biological role, synthesizes cyclic GMP (cGMP) from GTP. May play a role in sensory neurons. This chain is Soluble guanylate cyclase gcy-37 (gcy-37), found in Caenorhabditis elegans.